The primary structure comprises 128 residues: Ribonuclease pancreatic (128 aa).

Over residues 1-13 (KESPAMKFERQHM) the composition is skewed to basic and acidic residues. The interval 1 to 26 (KESPAMKFERQHMDSGSTSSSNPTYC) is disordered. Residues Lys7 and Arg10 each contribute to the substrate site. His12 functions as the Proton acceptor in the catalytic mechanism. Polar residues predominate over residues 14–26 (DSGSTSSSNPTYC). Disulfide bonds link Cys26/Cys84, Cys40/Cys95, Cys58/Cys110, and Cys65/Cys72. Residue Asn34 is glycosylated (N-linked (GlcNAc...) asparagine). 41–45 (KPVNT) is a substrate binding site. N-linked (GlcNAc...) asparagine glycosylation occurs at Asn62. Residues Lys66 and Arg85 each contribute to the substrate site. Residue His119 is the Proton donor of the active site.

It belongs to the pancreatic ribonuclease family. Monomer. Interacts with and forms tight 1:1 complexes with RNH1. Dimerization of two such complexes may occur. Interaction with RNH1 inhibits this protein. In terms of tissue distribution, pancreas.

Its subcellular location is the secreted. The enzyme catalyses an [RNA] containing cytidine + H2O = an [RNA]-3'-cytidine-3'-phosphate + a 5'-hydroxy-ribonucleotide-3'-[RNA].. It catalyses the reaction an [RNA] containing uridine + H2O = an [RNA]-3'-uridine-3'-phosphate + a 5'-hydroxy-ribonucleotide-3'-[RNA].. Its function is as follows. Endonuclease that catalyzes the cleavage of RNA on the 3' side of pyrimidine nucleotides. Acts on single-stranded and double-stranded RNA. This Equus caballus (Horse) protein is Ribonuclease pancreatic (RNASE1).